A 260-amino-acid chain; its full sequence is Magnesium dechelatase SGRL, chloroplastic (260 aa).

A chloroplast-targeting transit peptide spans methionine 1–arginine 45.

The protein belongs to the staygreen family. Interacts with the light harvesting complex II (LHCII). Interacts with the chlorophyll catabolic enzymes (CCEs) NYC1, NOL, PAO and RCCR. As to expression, expressed in cotyledons, pollen and young leaves.

It localises to the plastid. Its subcellular location is the chloroplast thylakoid. It carries out the reaction chlorophyllide a + 2 H(+) = pheophorbide a + Mg(2+). Magnesium chelatase involved in chlorophyll a degradation in the chlorophyll-protein complexes of photosystem I (PSI) and photosystem II (PSII). Contributes to the degradation of PSI and PSII in the thylakoid membranes. Recombinant SGRL possesses high dechelating activity against chlorophyllide a, very low activity against chlorophyll a, and no activity against chlorophyll b. Contributes to abiotic stress-induced chlorophyll degradation and leaf yellowing during vegetative plant growth. This is Magnesium dechelatase SGRL, chloroplastic from Arabidopsis thaliana (Mouse-ear cress).